A 358-amino-acid chain; its full sequence is Dynein axonemal assembly factor 10 (358 aa).

6 WD repeats span residues 63–105 (EKKH…QPVF), 109–154 (AHAS…APVA), 162–205 (NNVR…VRWE), 207–249 (NVRN…PKKG), 258–298 (TAGA…QRKV), and 320–358 (ISTQPVAGFDWSPDKEGLFACVAFDQAVRVGIVTKLNKV).

In terms of assembly, interacts with PIH1D1; the interaction associates DNAAF10 with the R2TP complex. Interacts with several dynein axonemal assembly factors.

It is found in the dynein axonemal particle. Its function is as follows. Key assembly factor specifically required for the stability of axonemal dynein heavy chains in cytoplasm. The protein is Dynein axonemal assembly factor 10 (dnaaf10) of Chlamydomonas reinhardtii (Chlamydomonas smithii).